A 275-amino-acid chain; its full sequence is Adaptin ear-binding coat-associated protein 1 (275 aa).

The interval 168 to 275 is disordered; it reads AKKGGASKPR…APQPSNWVQF (108 aa). The segment covering 187–201 has biased composition (pro residues); the sequence is LPPPPGGKVTIPPPS. T211 bears the Phosphothreonine mark. Low complexity predominate over residues 233–248; it reads SPAPVSTSAPAPVSTS. 2 consecutive short sequence motifs (WXXF motif) follow at residues 252–255 and 272–275; these read WGDF and WVQF. A compositionally biased stretch (polar residues) spans 256–275; it reads STASSSVPNQAPQPSNWVQF.

It belongs to the NECAP family. As to quaternary structure, interacts with AP1G1 and AP2A1 components of the adapter protein complexes AP-1 and AP-2. Interacts with the GAE domain proteins GGA1, GGA2 and GGA3. In terms of tissue distribution, expressed primarily in brain (at protein level).

The protein resides in the cytoplasmic vesicle. The protein localises to the clathrin-coated vesicle membrane. It localises to the cell membrane. Its function is as follows. Involved in endocytosis. The chain is Adaptin ear-binding coat-associated protein 1 (Necap1) from Mus musculus (Mouse).